The chain runs to 234 residues: UPF0441 protein plu3956 (234 aa).

Disordered stretches follow at residues 105–129 (QAGL…QQSG) and 149–234 (SAPS…SVGG). A compositionally biased stretch (low complexity) spans 110 to 127 (TTTSSTSTNGEAQAQQQQ). The span at 150–175 (APSQPLFSSKSATSPANGQFVDSTGK) shows a compositional bias: polar residues. 2 stretches are compositionally biased toward low complexity: residues 188–205 (TVPK…TTIT) and 216–234 (QSTM…SVGG).

This sequence belongs to the UPF0441 family.

The chain is UPF0441 protein plu3956 from Photorhabdus laumondii subsp. laumondii (strain DSM 15139 / CIP 105565 / TT01) (Photorhabdus luminescens subsp. laumondii).